Here is a 225-residue protein sequence, read N- to C-terminus: Uridylate kinase (225 aa).

Residue 9–10 (GS) participates in ATP binding. Gly46 contributes to the UMP binding site. Positions 47 and 51 each coordinate ATP. Residues Asp67 and 115–121 (THPAHTT) each bind UMP. Residues Thr141, Asn142, Tyr147, and Asp150 each coordinate ATP.

Belongs to the UMP kinase family. In terms of assembly, homohexamer.

It is found in the cytoplasm. The catalysed reaction is UMP + ATP = UDP + ADP. It functions in the pathway pyrimidine metabolism; CTP biosynthesis via de novo pathway; UDP from UMP (UMPK route): step 1/1. Inhibited by UTP. In terms of biological role, catalyzes the reversible phosphorylation of UMP to UDP. The protein is Uridylate kinase of Methanococcus maripaludis (strain C7 / ATCC BAA-1331).